We begin with the raw amino-acid sequence, 118 residues long: UPF0102 protein NE0711 (118 aa).

This sequence belongs to the UPF0102 family.

The chain is UPF0102 protein NE0711 from Nitrosomonas europaea (strain ATCC 19718 / CIP 103999 / KCTC 2705 / NBRC 14298).